A 595-amino-acid polypeptide reads, in one-letter code: Sulfite reductase [NADPH] flavoprotein alpha-component (595 aa).

The 139-residue stretch at Ile-59–Val-197 folds into the Flavodoxin-like domain. Residues Ser-65 to Ala-70, Ser-112 to Gly-115, and Leu-148 to Ala-157 each bind FMN. The region spanning Glu-230–Pro-444 is the FAD-binding FR-type domain. FAD-binding positions include Thr-318, Phe-352, Arg-382–Ser-385, Thr-400–Ser-402, Tyr-406, and Gly-415–Ser-418. NADP(+) contacts are provided by residues Ser-515 to Gln-516, Lys-521 to Gln-525, and Asp-557. Residue Tyr-595 coordinates FAD.

The protein belongs to the NADPH-dependent sulphite reductase flavoprotein subunit CysJ family. In the N-terminal section; belongs to the flavodoxin family. It in the C-terminal section; belongs to the flavoprotein pyridine nucleotide cytochrome reductase family. In terms of assembly, alpha(8)-beta(8). The alpha component is a flavoprotein, the beta component is a hemoprotein. It depends on FAD as a cofactor. FMN is required as a cofactor.

It carries out the reaction hydrogen sulfide + 3 NADP(+) + 3 H2O = sulfite + 3 NADPH + 4 H(+). It participates in sulfur metabolism; hydrogen sulfide biosynthesis; hydrogen sulfide from sulfite (NADPH route): step 1/1. In terms of biological role, component of the sulfite reductase complex that catalyzes the 6-electron reduction of sulfite to sulfide. This is one of several activities required for the biosynthesis of L-cysteine from sulfate. The flavoprotein component catalyzes the electron flow from NADPH -&gt; FAD -&gt; FMN to the hemoprotein component. The sequence is that of Sulfite reductase [NADPH] flavoprotein alpha-component from Baumannia cicadellinicola subsp. Homalodisca coagulata.